The primary structure comprises 135 residues: MRVLGLDVGDRTIGVAVSDPLGFTAQGITTVHRKSVKEDIDELKKICKEYAVELIISGLPKNMNGTVGEQGEKVIEFCELLKSELKMPIKMWDERLTTVAAHRAMLEANLSRAKRKKIVDKMAATYILQGYLDSI.

It belongs to the YqgF nuclease family.

The protein resides in the cytoplasm. In terms of biological role, could be a nuclease involved in processing of the 5'-end of pre-16S rRNA. The protein is Putative pre-16S rRNA nuclease of Clostridium novyi (strain NT).